The sequence spans 248 residues: PF03932 family protein CutC (248 aa).

Belongs to the CutC family. Homodimer.

The protein localises to the cytoplasm. This is PF03932 family protein CutC from Escherichia coli O157:H7.